The sequence spans 224 residues: 7-cyano-7-deazaguanine synthase (224 aa).

9-19 (LSGGLDSATAL) serves as a coordination point for ATP. Cys-188, Cys-198, Cys-201, and Cys-204 together coordinate Zn(2+).

This sequence belongs to the QueC family. It depends on Zn(2+) as a cofactor.

The catalysed reaction is 7-carboxy-7-deazaguanine + NH4(+) + ATP = 7-cyano-7-deazaguanine + ADP + phosphate + H2O + H(+). It participates in purine metabolism; 7-cyano-7-deazaguanine biosynthesis. In terms of biological role, catalyzes the ATP-dependent conversion of 7-carboxy-7-deazaguanine (CDG) to 7-cyano-7-deazaguanine (preQ(0)). In Thiobacillus denitrificans (strain ATCC 25259 / T1), this protein is 7-cyano-7-deazaguanine synthase.